The following is a 257-amino-acid chain: Hydroxyacylglutathione hydrolase (257 aa).

Zn(2+) is bound by residues His-54, His-56, Asp-58, His-59, His-113, Asp-137, and His-175.

Belongs to the metallo-beta-lactamase superfamily. Glyoxalase II family. As to quaternary structure, monomer. It depends on Zn(2+) as a cofactor.

It catalyses the reaction an S-(2-hydroxyacyl)glutathione + H2O = a 2-hydroxy carboxylate + glutathione + H(+). It participates in secondary metabolite metabolism; methylglyoxal degradation; (R)-lactate from methylglyoxal: step 2/2. Its function is as follows. Thiolesterase that catalyzes the hydrolysis of S-D-lactoyl-glutathione to form glutathione and D-lactic acid. The protein is Hydroxyacylglutathione hydrolase of Microcystis aeruginosa (strain NIES-843 / IAM M-2473).